A 79-amino-acid polypeptide reads, in one-letter code: Cyclin-dependent kinases regulatory subunit 1 (79 aa).

Ser2 bears the N-acetylserine mark.

Belongs to the CKS family. In terms of assembly, forms a homohexamer that can probably bind six kinase subunits.

Functionally, binds to the catalytic subunit of the cyclin dependent kinases and is essential for their biological function. In Bos taurus (Bovine), this protein is Cyclin-dependent kinases regulatory subunit 1 (CKS1B).